A 326-amino-acid chain; its full sequence is ATP phosphoribosyltransferase regulatory subunit (326 aa).

This sequence belongs to the class-II aminoacyl-tRNA synthetase family. HisZ subfamily. Heteromultimer composed of HisG and HisZ subunits.

Its subcellular location is the cytoplasm. It participates in amino-acid biosynthesis; L-histidine biosynthesis; L-histidine from 5-phospho-alpha-D-ribose 1-diphosphate: step 1/9. Its function is as follows. Required for the first step of histidine biosynthesis. May allow the feedback regulation of ATP phosphoribosyltransferase activity by histidine. The sequence is that of ATP phosphoribosyltransferase regulatory subunit from Streptococcus thermophilus (strain ATCC BAA-491 / LMD-9).